The chain runs to 514 residues: HMG box-containing protein 1 (514 aa).

The disordered stretch occupies residues 150–182 (ARPPPVSSSSKSEPAFPHHHWKEETPVRHERAN). Residues 170 to 182 (WKEETPVRHERAN) are compositionally biased toward basic and acidic residues. The AXH domain occupies 203-345 (WCNSWPSTVW…PPGHPDAINF (143 aa)). Residues 434 to 502 (CKRPMNAFML…EQKRLNPDCW (69 aa)) constitute a DNA-binding region (HMG box).

In terms of assembly, binds the second PAH repeat of SIN3A. Binds TCF4. Binds RB1. Post-translationally, ubiquitinated by the CTLH E3 ubiquitin-protein ligase complex, leading to subsequent proteasomal degradation.

The protein localises to the nucleus. In terms of biological role, transcriptional repressor that binds to the promoter region of target genes. Plays a role in the regulation of the cell cycle and of the Wnt pathway. Binds preferentially to the sequence 5'-TTCATTCATTCA-3'. Binding to the histone H1.0 promoter is enhanced by interaction with RB1. Disrupts the interaction between DNA and TCF4. The sequence is that of HMG box-containing protein 1 (HBP1) from Homo sapiens (Human).